The following is a 499-amino-acid chain: Glycerol kinase (499 aa).

Thr13 is an ADP binding site. The ATP site is built by Thr13, Thr14, and Ser15. Thr13 contacts sn-glycerol 3-phosphate. ADP is bound at residue Arg17. Sn-glycerol 3-phosphate is bound by residues Arg83, Glu84, Tyr135, and Asp245. Glycerol is bound by residues Arg83, Glu84, Tyr135, Asp245, and Gln246. ADP is bound by residues Thr267 and Gly310. The ATP site is built by Thr267, Gly310, Gln314, and Ala411. Ala411 and Asn415 together coordinate ADP.

It belongs to the FGGY kinase family.

It catalyses the reaction glycerol + ATP = sn-glycerol 3-phosphate + ADP + H(+). It functions in the pathway polyol metabolism; glycerol degradation via glycerol kinase pathway; sn-glycerol 3-phosphate from glycerol: step 1/1. With respect to regulation, inhibited by fructose 1,6-bisphosphate (FBP). Its function is as follows. Key enzyme in the regulation of glycerol uptake and metabolism. Catalyzes the phosphorylation of glycerol to yield sn-glycerol 3-phosphate. The protein is Glycerol kinase of Xylella fastidiosa (strain M12).